We begin with the raw amino-acid sequence, 310 residues long: Beta-ketoacyl-[acyl-carrier-protein] synthase III 1 (310 aa).

Active-site residues include Cys112 and His235. Residues Gln236–Arg240 form an ACP-binding region. Residue Asn265 is part of the active site.

Belongs to the thiolase-like superfamily. FabH family. Homodimer.

The protein localises to the cytoplasm. It carries out the reaction malonyl-[ACP] + acetyl-CoA + H(+) = 3-oxobutanoyl-[ACP] + CO2 + CoA. It functions in the pathway lipid metabolism; fatty acid biosynthesis. Its function is as follows. Catalyzes the condensation reaction of fatty acid synthesis by the addition to an acyl acceptor of two carbons from malonyl-ACP. Catalyzes the first condensation reaction which initiates fatty acid synthesis and may therefore play a role in governing the total rate of fatty acid production. Possesses both acetoacetyl-ACP synthase and acetyl transacylase activities. Its substrate specificity determines the biosynthesis of branched-chain and/or straight-chain of fatty acids. The chain is Beta-ketoacyl-[acyl-carrier-protein] synthase III 1 from Bacillus anthracis.